We begin with the raw amino-acid sequence, 123 residues long: Large ribosomal subunit protein uL14 (123 aa).

The protein belongs to the universal ribosomal protein uL14 family. As to quaternary structure, part of the 50S ribosomal subunit. Forms a cluster with proteins L3 and L19. In the 70S ribosome, L14 and L19 interact and together make contacts with the 16S rRNA in bridges B5 and B8.

In terms of biological role, binds to 23S rRNA. Forms part of two intersubunit bridges in the 70S ribosome. This is Large ribosomal subunit protein uL14 from Chromohalobacter salexigens (strain ATCC BAA-138 / DSM 3043 / CIP 106854 / NCIMB 13768 / 1H11).